A 172-amino-acid chain; its full sequence is C-phycocyanin beta chain (172 aa).

N4-methylasparagine is present on N72. (2R,3E)-phycocyanobilin is bound by residues C82 and C153.

This sequence belongs to the phycobiliprotein family. In terms of assembly, heterodimer of an alpha and a beta subunit, which further assembles into trimers and the trimers into hexamers. The basic functional unit of phycobiliproteins is a ring-shaped hexamer formed from two back-to-back trimers contacting via the alpha chain subunits. The trimers are composed of alpha/beta subunit heterodimers arranged around a three-fold axis of symmetry. The phycoerythrins also contain a gamma subunit which is located in the center of the hexamer. In terms of processing, contains two covalently linked bilin chromophores.

The protein resides in the plastid. Its subcellular location is the chloroplast thylakoid membrane. Light-harvesting photosynthetic bile pigment-protein from the phycobiliprotein complex (phycobilisome, PBS). Phycocyanin is the major phycobiliprotein in the PBS rod. The sequence is that of C-phycocyanin beta chain (cpcB) from Aglaothamnion neglectum (Red alga).